The sequence spans 113 residues: MNELKHMACVPCAEAGSPLAADEIDRLRQELPDWEVVTEEGMVRLRRTFTFPDFGQALAFTNRVGELAEAEGHHPRLVTEWGRVTVEWWTHSAGGLHRNDFIMAARTGGLHEG.

This sequence belongs to the pterin-4-alpha-carbinolamine dehydratase family.

It catalyses the reaction (4aS,6R)-4a-hydroxy-L-erythro-5,6,7,8-tetrahydrobiopterin = (6R)-L-erythro-6,7-dihydrobiopterin + H2O. The protein is Putative pterin-4-alpha-carbinolamine dehydratase of Chlorobium limicola (strain DSM 245 / NBRC 103803 / 6330).